The following is a 369-amino-acid chain: Type 2 DNA topoisomerase 6 subunit A (369 aa).

The Topo IIA-type catalytic domain occupies 10 to 146 (KPREIAKQKI…LGFIPEEDGS (137 aa)). Y103 (O-(5'-phospho-DNA)-tyrosine intermediate) is an active-site residue. The Mg(2+) site is built by E197 and D249.

It belongs to the TOP6A family. Homodimer. Heterotetramer of two Top6A and two Top6B chains. Mg(2+) is required as a cofactor.

It carries out the reaction ATP-dependent breakage, passage and rejoining of double-stranded DNA.. Its function is as follows. Relaxes both positive and negative superturns and exhibits a strong decatenase activity. This Methanocaldococcus jannaschii (strain ATCC 43067 / DSM 2661 / JAL-1 / JCM 10045 / NBRC 100440) (Methanococcus jannaschii) protein is Type 2 DNA topoisomerase 6 subunit A.